The following is a 198-amino-acid chain: Regulation of enolase protein 1 (198 aa).

It localises to the cytoplasm. In terms of biological role, functions in the galactose metabolic pathway via the GAL83 protein and that it may control the level of ENO1. In Saccharomyces cerevisiae (strain ATCC 204508 / S288c) (Baker's yeast), this protein is Regulation of enolase protein 1 (REE1).